Here is a 272-residue protein sequence, read N- to C-terminus: MSTFVAKDGTQIYFKDWGSGKPVLFSHGWLLDADMWEYQMEYLSSRGYRTIAFDRRGFGRSDQPWTGNDYDTFADDIAQLIEHLDLKEVTLVGFSMGGGDVARYIARHGSARVAGLVLLGAVTPLFGQKPDYPQGVPLDVFARFKTELLKDRAQFISDFNAPFYGINKGQVVSQGVQTQTLQIALLASLKATVDCVTAFAETDFRPDMAKIDVPTLVIHGDGDQIVPFETTGKVAAELIKGAELKVYKDAPHGFAVTHAQQLNEDLLAFLKR.

In terms of domain architecture, AB hydrolase-1 spans 21-253 (KPVLFSHGWL…LKVYKDAPHG (233 aa)). Trp29 contacts acetate. Residue Ser95 is part of the active site. Residue Met96 participates in acetate binding. Active-site residues include Asp223 and His252.

This sequence belongs to the AB hydrolase superfamily. Bacterial non-heme haloperoxidase / perhydrolase family. As to quaternary structure, dimer of trimers.

It carries out the reaction a phenyl acetate + H2O = a phenol + acetate + H(+). The catalysed reaction is peracetic acid + H2O = acetate + H2O2 + H(+). It catalyses the reaction a percarboxylic acid + H2O = a carboxylate + H2O2 + H(+). Functionally, hydrolyzes phenolic esters, such as phenyl acetate, nitrophenyl acetate and naphtyl acetate. Can act on a wide range of esters, but reaction rate and enantioselectivity differ significantly depending on the substrate. Shows a preference for esters with small acyl groups. Also shows low perhydrolase activity, and catalyzes the reversible formation of peroxycarboxylic acids from carboxylic acids and hydrogen peroxide. In vitro, enzyme-generated peracetic acid oxidizes bromide ion to bromonium, which reacts with monochlorodimedone to form bromochlorodimedone. This Pseudomonas fluorescens protein is Arylesterase.